Here is a 227-residue protein sequence, read N- to C-terminus: UPF0758 protein lpp2553 (227 aa).

The MPN domain maps to 102 to 225; the sequence is RLSNTQQTYA…YSIFAENKWV (124 aa). Zn(2+)-binding residues include His-173, His-175, and Asp-186. A JAMM motif motif is present at residues 173–186; sequence HNHPSGLSDASQQD.

It belongs to the UPF0758 family.

The protein is UPF0758 protein lpp2553 of Legionella pneumophila (strain Paris).